The chain runs to 217 residues: Probable GTP-binding protein EngB (217 aa).

Residues 27 to 201 (TGIEVAFAGR…RDKLDTWFSE (175 aa)) enclose the EngB-type G domain. GTP-binding positions include 35 to 42 (GRSNAGKS), 62 to 66 (GRTQL), 80 to 83 (DLPG), 147 to 150 (TKAD), and 180 to 182 (FSS). Mg(2+) contacts are provided by S42 and T64.

The protein belongs to the TRAFAC class TrmE-Era-EngA-EngB-Septin-like GTPase superfamily. EngB GTPase family. Requires Mg(2+) as cofactor.

Its function is as follows. Necessary for normal cell division and for the maintenance of normal septation. In Edwardsiella ictaluri (strain 93-146), this protein is Probable GTP-binding protein EngB.